The following is a 383-amino-acid chain: tRNA pseudouridine synthase B (383 aa).

Asp53 (nucleophile) is an active-site residue.

It belongs to the pseudouridine synthase TruB family. Type 1 subfamily.

The catalysed reaction is uridine(55) in tRNA = pseudouridine(55) in tRNA. Its function is as follows. Responsible for synthesis of pseudouridine from uracil-55 in the psi GC loop of transfer RNAs. The sequence is that of tRNA pseudouridine synthase B from Tropheryma whipplei (strain TW08/27) (Whipple's bacillus).